The chain runs to 259 residues: Hemin import ATP-binding protein HmuV (259 aa).

Residues 2–238 (IEARDLNVSI…ALLSEVFDCQ (237 aa)) enclose the ABC transporter domain. 34-41 (GPNGSGKS) lines the ATP pocket.

It belongs to the ABC transporter superfamily. Heme (hemin) importer (TC 3.A.1.14.5) family. In terms of assembly, the complex is composed of two ATP-binding proteins (HmuV), two transmembrane proteins (HmuU) and a solute-binding protein (HmuT).

Its subcellular location is the cell inner membrane. Its function is as follows. Part of the ABC transporter complex HmuTUV involved in hemin import. Responsible for energy coupling to the transport system. This chain is Hemin import ATP-binding protein HmuV, found in Chelativorans sp. (strain BNC1).